Reading from the N-terminus, the 136-residue chain is Orexigenic neuropeptide QRFP (136 aa).

The N-terminal stretch at 1–18 (MVRPYPLIYFLFLPLGAC) is a signal peptide. A propeptide spanning residues 19-90 (FPLLDRREPT…HAGCRFRFGR (72 aa)) is cleaved from the precursor. Position 91 is a pyrrolidone carboxylic acid (glutamine 91). Phenylalanine amide is present on phenylalanine 133.

This sequence belongs to the RFamide neuropeptide family. In terms of assembly, ligand for the G-protein coupled receptor QRFPR/GPR103. Expressed widely in the brain with highest expression levels in the cerebellum, medulla, pituitary, retina, vestibular nucleus, and white matter. Also expressed in the bladder, colon, coronary artery, parathyroid gland, prostate, testis, and thyroid.

The protein localises to the secreted. Its function is as follows. Stimulates feeding behavior, metabolic rate and locomotor activity and increases blood pressure. May have orexigenic activity. May promote aldosterone secretion by the adrenal gland. The sequence is that of Orexigenic neuropeptide QRFP from Homo sapiens (Human).